The sequence spans 307 residues: Ribonuclease Z (307 aa).

Residues H63, H65, D67, H68, H140, D211, and H269 each contribute to the Zn(2+) site. The Proton acceptor role is filled by D67.

This sequence belongs to the RNase Z family. Homodimer. It depends on Zn(2+) as a cofactor.

It carries out the reaction Endonucleolytic cleavage of RNA, removing extra 3' nucleotides from tRNA precursor, generating 3' termini of tRNAs. A 3'-hydroxy group is left at the tRNA terminus and a 5'-phosphoryl group is left at the trailer molecule.. In terms of biological role, zinc phosphodiesterase, which displays some tRNA 3'-processing endonuclease activity. Probably involved in tRNA maturation, by removing a 3'-trailer from precursor tRNA. The polypeptide is Ribonuclease Z (Bacillus subtilis (strain 168)).